Here is a 1362-residue protein sequence, read N- to C-terminus: DNA-directed RNA polymerase subunit beta'' (1362 aa).

Cys224, Cys295, Cys302, and Cys305 together coordinate Zn(2+).

Belongs to the RNA polymerase beta' chain family. RpoC2 subfamily. In plastids the minimal PEP RNA polymerase catalytic core is composed of four subunits: alpha, beta, beta', and beta''. When a (nuclear-encoded) sigma factor is associated with the core the holoenzyme is formed, which can initiate transcription. Zn(2+) serves as cofactor.

The protein resides in the plastid. It is found in the chloroplast. It carries out the reaction RNA(n) + a ribonucleoside 5'-triphosphate = RNA(n+1) + diphosphate. Its function is as follows. DNA-dependent RNA polymerase catalyzes the transcription of DNA into RNA using the four ribonucleoside triphosphates as substrates. The polypeptide is DNA-directed RNA polymerase subunit beta'' (Helianthus annuus (Common sunflower)).